The following is a 305-amino-acid chain: MVSSTLLVMSISLFLGLSILLVVHGKDFNQDIDITWGDGRGNILNNGTLLNLGLDQSSGSGFQSKAEYLYGKVDMQIKLVPGNSAGTVTTFYLKSQGLTWDEIDFEFLGNVSGDPYIVHTNVYTQGKGDREQQFYLWFDPTAAFHNYSILWNPSHIVFYIDGKPIREFKNLEVLGVAYPKNQPMRMYGSLWNADDWATRGGLVKTNWSQGPFVASFMNYNSENACVWSIVNGTTTTSPCSPGDSTSSSSSSTSEWFSQRGMDSSSKKVLRWVQRKFMVYNYCKDKKRFSNGLPVECTAKNKNTKS.

The signal sequence occupies residues 1 to 25; it reads MVSSTLLVMSISLFLGLSILLVVHG. The GH16 domain occupies 26-216; that stretch reads KDFNQDIDIT…WSQGPFVASF (191 aa). An N-linked (GlcNAc...) asparagine glycan is attached at asparagine 46. The active-site Nucleophile is the glutamate 102. Catalysis depends on glutamate 106, which acts as the Proton donor. Glutamate 106 is a binding site for xyloglucan. Asparagine 110 carries an N-linked (GlcNAc...) asparagine glycan. Xyloglucan is bound by residues 119–121 and 129–131; these read HTN and DRE. The N-linked (GlcNAc...) asparagine glycan is linked to asparagine 146. Residues 195-196 and glycine 200 contribute to the xyloglucan site; that span reads DW. N-linked (GlcNAc...) asparagine glycosylation is found at asparagine 206 and asparagine 231. Disulfide bonds link cysteine 225/cysteine 239 and cysteine 282/cysteine 296. Low complexity predominate over residues 236 to 253; that stretch reads TSPCSPGDSTSSSSSSTS. The disordered stretch occupies residues 236–258; sequence TSPCSPGDSTSSSSSSTSEWFSQ. A xyloglucan-binding site is contributed by arginine 287.

This sequence belongs to the glycosyl hydrolase 16 family. XTH group 2 subfamily. Post-translationally, contains at least one intrachain disulfide bond essential for its enzymatic activity. Predominantly expressed in green siliques.

Its subcellular location is the secreted. It localises to the cell wall. The protein localises to the extracellular space. It is found in the apoplast. The enzyme catalyses breaks a beta-(1-&gt;4) bond in the backbone of a xyloglucan and transfers the xyloglucanyl segment on to O-4 of the non-reducing terminal glucose residue of an acceptor, which can be a xyloglucan or an oligosaccharide of xyloglucan.. In terms of biological role, catalyzes xyloglucan endohydrolysis (XEH) and/or endotransglycosylation (XET). Cleaves and religates xyloglucan polymers, an essential constituent of the primary cell wall, and thereby participates in cell wall construction of growing tissues. This is Probable xyloglucan endotransglucosylase/hydrolase protein 21 (XTH21) from Arabidopsis thaliana (Mouse-ear cress).